The primary structure comprises 197 residues: Small ribosomal subunit protein uS4B (197 aa).

One can recognise an S4 RNA-binding domain in the interval 88-151; sequence CRLDNIAYRI…RKNDEFADNF (64 aa).

It belongs to the universal ribosomal protein uS4 family. In terms of assembly, part of the 30S ribosomal subunit. Contacts protein S5. The interaction surface between S4 and S5 is involved in control of translational fidelity.

One of the primary rRNA binding proteins, it binds directly to 16S rRNA where it nucleates assembly of the body of the 30S subunit. Its function is as follows. With S5 and S12 plays an important role in translational accuracy. The polypeptide is Small ribosomal subunit protein uS4B (Clostridium botulinum (strain Hall / ATCC 3502 / NCTC 13319 / Type A)).